A 548-amino-acid polypeptide reads, in one-letter code: Chaperonin GroEL (548 aa).

ATP contacts are provided by residues 30 to 33 (TLGP), K51, 87 to 91 (DGTTT), G415, 479 to 481 (NAA), and D495.

The protein belongs to the chaperonin (HSP60) family. Forms a cylinder of 14 subunits composed of two heptameric rings stacked back-to-back. Interacts with the co-chaperonin GroES.

It localises to the cytoplasm. It catalyses the reaction ATP + H2O + a folded polypeptide = ADP + phosphate + an unfolded polypeptide.. Functionally, together with its co-chaperonin GroES, plays an essential role in assisting protein folding. The GroEL-GroES system forms a nano-cage that allows encapsulation of the non-native substrate proteins and provides a physical environment optimized to promote and accelerate protein folding. The chain is Chaperonin GroEL from Vibrio campbellii (strain ATCC BAA-1116).